Consider the following 338-residue polypeptide: Glyceraldehyde-3-phosphate dehydrogenase, cytosolic (338 aa).

Residues Ala-2 to Asn-153 are binding to NAD. NAD(+) is bound by residues Arg-15–Ile-16 and Asp-37. Residues Gly-56 to Glu-75 are external loop. Position 84 (Arg-84) interacts with NAD(+). The interval Ala-154–Ala-338 is catalytic. Ser-155–Thr-157 serves as a coordination point for D-glyceraldehyde 3-phosphate. Cys-156 (nucleophile) is an active-site residue. 2 positions are modified to S-nitrosocysteine: Cys-156 and Cys-160. Positions His-183–Ala-206 are S-loop. Residues Thr-186, Thr-215–Gly-216, and Arg-238 contribute to the D-glyceraldehyde 3-phosphate site. Asn-320 is an NAD(+) binding site.

The protein belongs to the glyceraldehyde-3-phosphate dehydrogenase family. Homotetramer.

It localises to the cytoplasm. It carries out the reaction D-glyceraldehyde 3-phosphate + phosphate + NAD(+) = (2R)-3-phospho-glyceroyl phosphate + NADH + H(+). The protein operates within carbohydrate degradation; glycolysis; pyruvate from D-glyceraldehyde 3-phosphate: step 1/5. Its function is as follows. Key enzyme in glycolysis that catalyzes the first step of the pathway by converting D-glyceraldehyde 3-phosphate (G3P) into 3-phospho-D-glyceroyl phosphate. Essential for the maintenance of cellular ATP levels and carbohydrate metabolism. The sequence is that of Glyceraldehyde-3-phosphate dehydrogenase, cytosolic (GAPC) from Sinapis alba (White mustard).